We begin with the raw amino-acid sequence, 743 residues long: Peptide transporter family 1 (743 aa).

The interval 1 to 28 (MASEITNGKNGQNGKNGQKEESDSQIAP) is disordered. Low complexity predominate over residues 7–16 (NGKNGQNGKN). 10 consecutive transmembrane segments (helical) span residues 74–94 (VLFH…ALIA), 104–124 (ILYL…GAVP), 132–152 (AVTV…KPCV), 173–193 (FSLF…FTPI), 207–227 (FSLA…IFMA), 334–354 (VVNP…IYPA), 364–384 (LQKL…SAGL), 597–619 (LPQI…EFSY), 629–649 (VLQA…VVIA), and 659–679 (GEFT…LWLA).

It belongs to the major facilitator superfamily. Proton-dependent oligopeptide transporter (POT/PTR) (TC 2.A.17) family. As to expression, expressed in thorax and abdomen of females: apical epithelial membranes of midgut, rectum, and reproductive tract. Also expressed in neuropil of the central nervous system, with elevated expression within the alpha- and beta-lobes of the mushroom bodies.

It localises to the membrane. Functionally, important role in absorption of dietary peptides. High-affinity transporter of alanylalanine. Dipeptide transport activity is proton dependent. In Drosophila melanogaster (Fruit fly), this protein is Peptide transporter family 1 (yin).